The primary structure comprises 159 residues: 2-amino-4-hydroxy-6-hydroxymethyldihydropteridine pyrophosphokinase (159 aa).

It belongs to the HPPK family. In terms of assembly, monomer.

The catalysed reaction is 6-hydroxymethyl-7,8-dihydropterin + ATP = (7,8-dihydropterin-6-yl)methyl diphosphate + AMP + H(+). The protein operates within cofactor biosynthesis; tetrahydrofolate biosynthesis; 2-amino-4-hydroxy-6-hydroxymethyl-7,8-dihydropteridine diphosphate from 7,8-dihydroneopterin triphosphate: step 4/4. Its function is as follows. Catalyzes the transfer of pyrophosphate from adenosine triphosphate (ATP) to 6-hydroxymethyl-7,8-dihydropterin, an enzymatic step in folate biosynthesis pathway. This is 2-amino-4-hydroxy-6-hydroxymethyldihydropteridine pyrophosphokinase (folK) from Escherichia coli (strain K12).